The chain runs to 272 residues: Tryptophan synthase alpha chain (272 aa).

Residues E49 and E60 each act as proton acceptor in the active site.

It belongs to the TrpA family. Tetramer of two alpha and two beta chains.

The catalysed reaction is (1S,2R)-1-C-(indol-3-yl)glycerol 3-phosphate + L-serine = D-glyceraldehyde 3-phosphate + L-tryptophan + H2O. Its pathway is amino-acid biosynthesis; L-tryptophan biosynthesis; L-tryptophan from chorismate: step 5/5. In terms of biological role, the alpha subunit is responsible for the aldol cleavage of indoleglycerol phosphate to indole and glyceraldehyde 3-phosphate. This chain is Tryptophan synthase alpha chain, found in Legionella pneumophila (strain Paris).